Reading from the N-terminus, the 256-residue chain is 5-keto-4-deoxy-D-glucarate aldolase (256 aa).

His-50 acts as the Proton acceptor in catalysis. A substrate-binding site is contributed by Gln-151. A Mg(2+)-binding site is contributed by Glu-153. Ser-178 and Asp-179 together coordinate substrate. Asp-179 is a binding site for Mg(2+).

This sequence belongs to the HpcH/HpaI aldolase family. KDGluc aldolase subfamily. Homohexamer; trimer of dimers. Requires Mg(2+) as cofactor.

It carries out the reaction 5-dehydro-4-deoxy-D-glucarate = 2-hydroxy-3-oxopropanoate + pyruvate. It catalyses the reaction 2-dehydro-3-deoxy-D-glucarate = 2-hydroxy-3-oxopropanoate + pyruvate. The protein operates within carbohydrate acid metabolism; galactarate degradation; D-glycerate from galactarate: step 2/3. Functionally, catalyzes the reversible retro-aldol cleavage of both 5-keto-4-deoxy-D-glucarate and 2-keto-3-deoxy-D-glucarate to pyruvate and tartronic semialdehyde. The sequence is that of 5-keto-4-deoxy-D-glucarate aldolase from Salmonella agona (strain SL483).